A 210-amino-acid chain; its full sequence is Oligoribonuclease (210 aa).

The region spanning 12–177 (LVWIDLEMTG…ADIVESIREL (166 aa)) is the Exonuclease domain. Residue Tyr-134 is part of the active site.

It belongs to the oligoribonuclease family.

Its subcellular location is the cytoplasm. In terms of biological role, 3'-to-5' exoribonuclease specific for small oligoribonucleotides. This chain is Oligoribonuclease, found in Corynebacterium diphtheriae (strain ATCC 700971 / NCTC 13129 / Biotype gravis).